Here is a 249-residue protein sequence, read N- to C-terminus: AA9 family lytic polysaccharide monooxygenase A (249 aa).

A signal peptide spans 1–21 (MALSKIAALSTILASASLVAG). His-22 contacts Cu(2+). Residue His-22 is modified to Methylhistidine. Residues Asn-34 and Asn-80 are each glycosylated (N-linked (GlcNAc...) asparagine). 2 cysteine pairs are disulfide-bonded: Cys-77–Cys-199 and Cys-118–Cys-122. Residue His-107 participates in Cu(2+) binding. O2 contacts are provided by His-185 and Gln-194. Tyr-196 contributes to the Cu(2+) binding site.

The protein belongs to the polysaccharide monooxygenase AA9 family. It depends on Cu(2+) as a cofactor. In terms of processing, the catalytically essential N-terminal histidine His-22 is post-translationally modified by methylation to prevent protonation of the histidine side chain, and protect the critical active site of the enzyme from oxidative damage.

It is found in the secreted. The enzyme catalyses [(1-&gt;4)-beta-D-glucosyl]n+m + reduced acceptor + O2 = 4-dehydro-beta-D-glucosyl-[(1-&gt;4)-beta-D-glucosyl]n-1 + [(1-&gt;4)-beta-D-glucosyl]m + acceptor + H2O.. Its function is as follows. Lytic polysaccharide monooxygenase (LPMO) that exhibits a mixed C1/C4 oxidative cleavage activity on cellulose and xyloglucan. Catalysis by LPMOs requires the reduction of the active-site copper from Cu(II) to Cu(I) by a reducing agent and H(2)O(2) or O(2) as a cosubstrate. Shows a higher boosting effect with cellulases on the enzymatic saccharification of complex lignocellulosic substrates associated with xyloglucan than on the lignocellulosic substrates without xyloglucan. The oxidative cleavage of xyloglucan by LPMO9A may facilitate to open up the sterical hindrance of cellulose by xyloglucan and thereby increase accessibility for cellulase to lignocellulosic substrates. The sequence is that of AA9 family lytic polysaccharide monooxygenase A from Penicillium parvum (Eupenicillium parvum).